The following is a 1192-amino-acid chain: DNA topoisomerase 2 (1192 aa).

ATP contacts are provided by residues asparagine 64, asparagine 95, and 142–149 (GTNGVGLK). The Mg(2+) site is built by glutamate 438, aspartate 539, and aspartate 541. In terms of domain architecture, Topo IIA-type catalytic spans 707–1174 (IPNFLDGMTR…PGASVWLEEI (468 aa)). The active-site O-(5'-phospho-DNA)-tyrosine intermediate is the tyrosine 800.

The protein belongs to the type II topoisomerase family. The cofactor is Mg(2+). Requires Mn(2+) as cofactor. Ca(2+) serves as cofactor.

The protein localises to the host cytoplasm. The enzyme catalyses ATP-dependent breakage, passage and rejoining of double-stranded DNA.. Type II topoisomerase. Processively relaxes supercoiled DNA. Displays DNA-supercoiling activity only when associated with the viral histone-like protein. This chain is DNA topoisomerase 2, found in African swine fever virus (isolate Pig/Kenya/KEN-50/1950) (ASFV).